A 125-amino-acid polypeptide reads, in one-letter code: Glycine cleavage system H protein (125 aa).

Positions 23 to 104 constitute a Lipoyl-binding domain; that stretch reads VVYIGITDYA…PYENWILKVK (82 aa). At lysine 64 the chain carries N6-lipoyllysine.

It belongs to the GcvH family. As to quaternary structure, the glycine cleavage system is composed of four proteins: P, T, L and H. Requires (R)-lipoate as cofactor.

The glycine cleavage system catalyzes the degradation of glycine. The H protein shuttles the methylamine group of glycine from the P protein to the T protein. The protein is Glycine cleavage system H protein of Clostridioides difficile (strain 630) (Peptoclostridium difficile).